We begin with the raw amino-acid sequence, 203 residues long: N-(5'-phosphoribosyl)anthranilate isomerase (203 aa).

It belongs to the TrpF family.

The enzyme catalyses N-(5-phospho-beta-D-ribosyl)anthranilate = 1-(2-carboxyphenylamino)-1-deoxy-D-ribulose 5-phosphate. Its pathway is amino-acid biosynthesis; L-tryptophan biosynthesis; L-tryptophan from chorismate: step 3/5. The sequence is that of N-(5'-phosphoribosyl)anthranilate isomerase from Thermoanaerobacter pseudethanolicus (strain ATCC 33223 / 39E) (Clostridium thermohydrosulfuricum).